We begin with the raw amino-acid sequence, 447 residues long: Chorismate synthase, chloroplastic (447 aa).

The tract at residues M1–G24 is disordered. The transit peptide at M1–Q57 directs the protein to the chloroplast.

The protein belongs to the chorismate synthase family. Homotetramer. FMNH2 is required as a cofactor. The N-terminus is blocked.

The protein localises to the plastid. The protein resides in the chloroplast. The enzyme catalyses 5-O-(1-carboxyvinyl)-3-phosphoshikimate = chorismate + phosphate. The protein operates within metabolic intermediate biosynthesis; chorismate biosynthesis; chorismate from D-erythrose 4-phosphate and phosphoenolpyruvate: step 7/7. Catalyzes the last common step of the biosynthesis of aromatic amino acids, produced via the shikimic acid pathway. The chain is Chorismate synthase, chloroplastic from Capnoides sempervirens (Rock-harlequin).